Reading from the N-terminus, the 262-residue chain is LysM domain-containing protein ARB_03438 (262 aa).

The signal sequence occupies residues 1-22 (MVSIPLILGAIILLGTRKAATA). One can recognise a LysM 1 domain in the interval 31–75 (FAVTAATDDTCQSLGAQWGIGMAQFLKWNPGVNCNALVAGKTYCL). The segment at 85-112 (TASLTPSPQVPTTSRATQTMTSKASTGT) is disordered. Over residues 86–112 (ASLTPSPQVPTTSRATQTMTSKASTGT) the composition is skewed to polar residues. The 48-residue stretch at 132–179 (FYHPVSPGDTCQSIVDRYKAFTLDQFYTWNPSVGKNCESLWLGYYVCT) folds into the LysM 2 domain. The tract at residues 184-240 (GPNSPSQQPPSQQPPSQQSPSQQSPSQQSPSQQPPSQQPPSQQPPSQQSNTSQQTQP) is disordered. Positions 197–214 (PPSQQSPSQQSPSQQSPS) are enriched in low complexity. Residues 215-226 (QQPPSQQPPSQQ) are compositionally biased toward pro residues. Positions 227-240 (PPSQQSNTSQQTQP) are enriched in low complexity. A glycan (N-linked (GlcNAc...) asparagine) is linked at asparagine 233.

Its subcellular location is the secreted. Might have a role in sequestration of chitin oligosaccharides (breakdown products of fungal cell walls that are released during invasion and act as triggers of host immunity) to dampen host defense. The protein is LysM domain-containing protein ARB_03438 of Arthroderma benhamiae (strain ATCC MYA-4681 / CBS 112371) (Trichophyton mentagrophytes).